A 196-amino-acid chain; its full sequence is Cysteine/O-acetylserine efflux protein (196 aa).

The chain crosses the membrane as a helical span at residues 1–21 (MTPTLISAFLTYTLITALTPG). The Cytoplasmic segment spans residues 22-41 (PNNILALSSVTSHGLRRSLR). A helical transmembrane segment spans residues 42 to 62 (VLAGMSVGFIITMLICAALTF). Residues 63 to 70 (SLVELDSR) lie on the Periplasmic side of the membrane. The helical transmembrane segment at 71–91 (FTLVLGWIGAAYILWLAWQIA) threads the bilayer. Over 92–114 (KSKPATGTPSVEPVGFWASLGLQ) the chain is Cytoplasmic. The chain crosses the membrane as a helical span at residues 115–135 (FVNVKIILYGITALSTFVLPV). Topologically, residues 136 to 139 (TREP) are periplasmic. The chain crosses the membrane as a helical span at residues 140–160 (VWLISVSLLLAAIGALGNLCW). The Cytoplasmic portion of the chain corresponds to 161 to 170 (ALAGHLFQRL). Residues 171-191 (FLLYGRQLNWMLAALLVYCAV) form a helical membrane-spanning segment. Over 192-196 (RIVVE) the chain is Periplasmic.

Belongs to the Rht family.

It localises to the cell inner membrane. The catalysed reaction is O-acetyl-L-serine(in) = O-acetyl-L-serine(out). The enzyme catalyses L-cysteine(in) = L-cysteine(out). Its function is as follows. Exporter of O-acetylserine (OAS) and cysteine. This is Cysteine/O-acetylserine efflux protein (eamB) from Klebsiella pneumoniae subsp. pneumoniae (strain ATCC 700721 / MGH 78578).